Reading from the N-terminus, the 184-residue chain is Ribosome maturation factor RimM (184 aa).

Positions Asp-111–Tyr-184 constitute a PRC barrel domain.

It belongs to the RimM family. Binds ribosomal protein uS19.

Its subcellular location is the cytoplasm. An accessory protein needed during the final step in the assembly of 30S ribosomal subunit, possibly for assembly of the head region. Essential for efficient processing of 16S rRNA. May be needed both before and after RbfA during the maturation of 16S rRNA. It has affinity for free ribosomal 30S subunits but not for 70S ribosomes. The chain is Ribosome maturation factor RimM from Ralstonia nicotianae (strain ATCC BAA-1114 / GMI1000) (Ralstonia solanacearum).